A 616-amino-acid polypeptide reads, in one-letter code: Chaperone protein HscA (616 aa).

Belongs to the heat shock protein 70 family.

Functionally, chaperone involved in the maturation of iron-sulfur cluster-containing proteins. Has a low intrinsic ATPase activity which is markedly stimulated by HscB. Involved in the maturation of IscU. The polypeptide is Chaperone protein HscA (Citrobacter koseri (strain ATCC BAA-895 / CDC 4225-83 / SGSC4696)).